A 283-amino-acid polypeptide reads, in one-letter code: Pantothenate synthetase (283 aa).

30 to 37 (MGNLHDGH) serves as a coordination point for ATP. Residue histidine 37 is the Proton donor of the active site. Glutamine 61 contacts (R)-pantoate. Glutamine 61 provides a ligand contact to beta-alanine. 149–152 (GEKD) is a binding site for ATP. Glutamine 155 lines the (R)-pantoate pocket. Residues valine 178 and 186–189 (LSSR) contribute to the ATP site.

It belongs to the pantothenate synthetase family. As to quaternary structure, homodimer.

It is found in the cytoplasm. It catalyses the reaction (R)-pantoate + beta-alanine + ATP = (R)-pantothenate + AMP + diphosphate + H(+). The protein operates within cofactor biosynthesis; (R)-pantothenate biosynthesis; (R)-pantothenate from (R)-pantoate and beta-alanine: step 1/1. Catalyzes the condensation of pantoate with beta-alanine in an ATP-dependent reaction via a pantoyl-adenylate intermediate. The protein is Pantothenate synthetase of Salmonella arizonae (strain ATCC BAA-731 / CDC346-86 / RSK2980).